The chain runs to 151 residues: Guanylate kinase homolog (151 aa).

Residues 1–141 (MEREGVDYHY…AYSKLIQILQ (141 aa)) enclose the Guanylate kinase-like domain.

This sequence belongs to the guanylate kinase family.

The sequence is that of Guanylate kinase homolog from Vaccinia virus (strain Copenhagen) (VACV).